We begin with the raw amino-acid sequence, 446 residues long: Ribosomal protein uS12 methylthiotransferase RimO (446 aa).

One can recognise an MTTase N-terminal domain in the interval 7–118 (PKIAFAHLGC…IVEVIERVER (112 aa)). 6 residues coordinate [4Fe-4S] cluster: Cys16, Cys52, Cys81, Cys156, Cys160, and Cys163. The 230-residue stretch at 142-371 (TTPAPVAYLR…MELQQPIAQR (230 aa)) folds into the Radical SAM core domain. The TRAM domain maps to 374-440 (AAEVGKIVPV…IYDLYGIIPA (67 aa)).

Belongs to the methylthiotransferase family. RimO subfamily. The cofactor is [4Fe-4S] cluster.

Its subcellular location is the cytoplasm. The enzyme catalyses L-aspartate(89)-[ribosomal protein uS12]-hydrogen + (sulfur carrier)-SH + AH2 + 2 S-adenosyl-L-methionine = 3-methylsulfanyl-L-aspartate(89)-[ribosomal protein uS12]-hydrogen + (sulfur carrier)-H + 5'-deoxyadenosine + L-methionine + A + S-adenosyl-L-homocysteine + 2 H(+). Functionally, catalyzes the methylthiolation of an aspartic acid residue of ribosomal protein uS12. This is Ribosomal protein uS12 methylthiotransferase RimO from Thermosynechococcus vestitus (strain NIES-2133 / IAM M-273 / BP-1).